The chain runs to 163 residues: Transcriptional repressor NrdR (163 aa).

The segment at 3–34 (CPFCRHPDSRVVDSRVSDDGSSIRRRRQCPQC) is a zinc-finger region. Residues 46–136 (LTVIKRSGIG…VYQAFESLDD (91 aa)) enclose the ATP-cone domain.

It belongs to the NrdR family. It depends on Zn(2+) as a cofactor.

In terms of biological role, negatively regulates transcription of bacterial ribonucleotide reductase nrd genes and operons by binding to NrdR-boxes. This chain is Transcriptional repressor NrdR, found in Renibacterium salmoninarum (strain ATCC 33209 / DSM 20767 / JCM 11484 / NBRC 15589 / NCIMB 2235).